A 460-amino-acid polypeptide reads, in one-letter code: Bifunctional protein GlmU (460 aa).

The pyrophosphorylase stretch occupies residues 1–230 (MSNNYAIILA…FDESLGVNDR (230 aa)). UDP-N-acetyl-alpha-D-glucosamine is bound by residues 9-12 (LAAG), Lys23, Gln73, and 78-79 (GT). Asp103 is a binding site for Mg(2+). 4 residues coordinate UDP-N-acetyl-alpha-D-glucosamine: Gly140, Glu155, Asn170, and Asn228. Mg(2+) is bound at residue Asn228. Residues 231–251 (VALATAEAVMRKRINEKHMVN) form a linker region. Positions 252-460 (GVTFINPDAT…TRFPFHPSQK (209 aa)) are N-acetyltransferase. Positions 333 and 351 each coordinate UDP-N-acetyl-alpha-D-glucosamine. His363 serves as the catalytic Proton acceptor. UDP-N-acetyl-alpha-D-glucosamine-binding residues include Tyr366 and Asn377. Residues Ala380, 386–387 (NY), Ser405, Ala423, and Arg440 contribute to the acetyl-CoA site.

It in the N-terminal section; belongs to the N-acetylglucosamine-1-phosphate uridyltransferase family. In the C-terminal section; belongs to the transferase hexapeptide repeat family. Homotrimer. Mg(2+) serves as cofactor.

It localises to the cytoplasm. The catalysed reaction is alpha-D-glucosamine 1-phosphate + acetyl-CoA = N-acetyl-alpha-D-glucosamine 1-phosphate + CoA + H(+). It carries out the reaction N-acetyl-alpha-D-glucosamine 1-phosphate + UTP + H(+) = UDP-N-acetyl-alpha-D-glucosamine + diphosphate. The protein operates within nucleotide-sugar biosynthesis; UDP-N-acetyl-alpha-D-glucosamine biosynthesis; N-acetyl-alpha-D-glucosamine 1-phosphate from alpha-D-glucosamine 6-phosphate (route II): step 2/2. Its pathway is nucleotide-sugar biosynthesis; UDP-N-acetyl-alpha-D-glucosamine biosynthesis; UDP-N-acetyl-alpha-D-glucosamine from N-acetyl-alpha-D-glucosamine 1-phosphate: step 1/1. It functions in the pathway bacterial outer membrane biogenesis; LPS lipid A biosynthesis. Catalyzes the last two sequential reactions in the de novo biosynthetic pathway for UDP-N-acetylglucosamine (UDP-GlcNAc). The C-terminal domain catalyzes the transfer of acetyl group from acetyl coenzyme A to glucosamine-1-phosphate (GlcN-1-P) to produce N-acetylglucosamine-1-phosphate (GlcNAc-1-P), which is converted into UDP-GlcNAc by the transfer of uridine 5-monophosphate (from uridine 5-triphosphate), a reaction catalyzed by the N-terminal domain. The chain is Bifunctional protein GlmU from Streptococcus suis (strain 98HAH33).